A 542-amino-acid chain; its full sequence is CTP synthase (542 aa).

The interval 1 to 265 is amidoligase domain; that stretch reads MTKYIFVTGG…LKPISKELSL (265 aa). Serine 13 serves as a coordination point for CTP. Position 13 (serine 13) interacts with UTP. ATP-binding positions include 14–19 and aspartate 71; that span reads SLGKGI. Mg(2+) contacts are provided by aspartate 71 and glutamate 139. Residues 146–148, 186–191, and lysine 222 each bind CTP; these read DIE and KSKPTQ. Residues 186-191 and lysine 222 contribute to the UTP site; that span reads KSKPTQ. A Glutamine amidotransferase type-1 domain is found at 290-541; that stretch reads VLGFVGKYLE…VEATLAISQE (252 aa). Residue glycine 352 coordinates L-glutamine. The active-site Nucleophile; for glutamine hydrolysis is cysteine 379. L-glutamine-binding positions include 380-383, glutamate 403, and arginine 471; that span reads LGMQ. Residues histidine 514 and glutamate 516 contribute to the active site.

The protein belongs to the CTP synthase family. Homotetramer.

It catalyses the reaction UTP + L-glutamine + ATP + H2O = CTP + L-glutamate + ADP + phosphate + 2 H(+). The catalysed reaction is L-glutamine + H2O = L-glutamate + NH4(+). It carries out the reaction UTP + NH4(+) + ATP = CTP + ADP + phosphate + 2 H(+). It participates in pyrimidine metabolism; CTP biosynthesis via de novo pathway; CTP from UDP: step 2/2. With respect to regulation, allosterically activated by GTP, when glutamine is the substrate; GTP has no effect on the reaction when ammonia is the substrate. The allosteric effector GTP functions by stabilizing the protein conformation that binds the tetrahedral intermediate(s) formed during glutamine hydrolysis. Inhibited by the product CTP, via allosteric rather than competitive inhibition. Its function is as follows. Catalyzes the ATP-dependent amination of UTP to CTP with either L-glutamine or ammonia as the source of nitrogen. Regulates intracellular CTP levels through interactions with the four ribonucleotide triphosphates. This chain is CTP synthase, found in Sulfurimonas denitrificans (strain ATCC 33889 / DSM 1251) (Thiomicrospira denitrificans (strain ATCC 33889 / DSM 1251)).